A 537-amino-acid chain; its full sequence is Chaperonin GroEL (537 aa).

Residues 29 to 32 (TLGP), 86 to 90 (DGTTT), Gly-413, and Asp-492 each bind ATP.

Belongs to the chaperonin (HSP60) family. As to quaternary structure, forms a cylinder of 14 subunits composed of two heptameric rings stacked back-to-back. Interacts with the co-chaperonin GroES.

The protein resides in the cytoplasm. It catalyses the reaction ATP + H2O + a folded polypeptide = ADP + phosphate + an unfolded polypeptide.. Functionally, together with its co-chaperonin GroES, plays an essential role in assisting protein folding. The GroEL-GroES system forms a nano-cage that allows encapsulation of the non-native substrate proteins and provides a physical environment optimized to promote and accelerate protein folding. The protein is Chaperonin GroEL of Dehalococcoides mccartyi (strain CBDB1).